Consider the following 81-residue polypeptide: ATP synthase subunit c, chloroplastic (81 aa).

2 helical membrane passes run 3–23 and 57–77; these read PLIASASVIAAGLAVGLASIG and LAFMEALTIYGLVVALALLFA.

Belongs to the ATPase C chain family. In terms of assembly, F-type ATPases have 2 components, F(1) - the catalytic core - and F(0) - the membrane proton channel. F(1) has five subunits: alpha(3), beta(3), gamma(1), delta(1), epsilon(1). F(0) has four main subunits: a(1), b(1), b'(1) and c(10-14). The alpha and beta chains form an alternating ring which encloses part of the gamma chain. F(1) is attached to F(0) by a central stalk formed by the gamma and epsilon chains, while a peripheral stalk is formed by the delta, b and b' chains.

Its subcellular location is the plastid. It localises to the chloroplast thylakoid membrane. Its function is as follows. F(1)F(0) ATP synthase produces ATP from ADP in the presence of a proton or sodium gradient. F-type ATPases consist of two structural domains, F(1) containing the extramembraneous catalytic core and F(0) containing the membrane proton channel, linked together by a central stalk and a peripheral stalk. During catalysis, ATP synthesis in the catalytic domain of F(1) is coupled via a rotary mechanism of the central stalk subunits to proton translocation. Functionally, key component of the F(0) channel; it plays a direct role in translocation across the membrane. A homomeric c-ring of between 10-14 subunits forms the central stalk rotor element with the F(1) delta and epsilon subunits. The chain is ATP synthase subunit c, chloroplastic from Chaetosphaeridium globosum (Charophycean green alga).